A 123-amino-acid polypeptide reads, in one-letter code: UPF0102 protein VFMJ11_2324 (123 aa).

This sequence belongs to the UPF0102 family.

This Aliivibrio fischeri (strain MJ11) (Vibrio fischeri) protein is UPF0102 protein VFMJ11_2324.